Consider the following 235-residue polypeptide: Carboxymethylenebutenolidase 2 (235 aa).

Catalysis depends on residues Cys117, Asp173, and His204.

It belongs to the dienelactone hydrolase family. As to quaternary structure, monomer.

It carries out the reaction 2-(5-oxo-2,5-dihydrofuran-2-ylidene)acetate + H2O = 4-oxohex-2-enedioate + H(+). It participates in aromatic compound metabolism; 3-chlorocatechol degradation. Functionally, ring cleavage of cyclic ester dienelactone to produce maleylacetate. The sequence is that of Carboxymethylenebutenolidase 2 (tfdEII) from Cupriavidus pinatubonensis (strain JMP 134 / LMG 1197) (Cupriavidus necator (strain JMP 134)).